The sequence spans 363 residues: 3-dehydroquinate synthase (363 aa).

Residues 72–77 (SGEQSK), 106–110 (GVIGD), 130–131 (TT), K142, and K151 each bind NAD(+). Zn(2+)-binding residues include E184, H246, and H263.

Belongs to the sugar phosphate cyclases superfamily. Dehydroquinate synthase family. Co(2+) serves as cofactor. Zn(2+) is required as a cofactor. The cofactor is NAD(+).

The protein resides in the cytoplasm. The catalysed reaction is 7-phospho-2-dehydro-3-deoxy-D-arabino-heptonate = 3-dehydroquinate + phosphate. It functions in the pathway metabolic intermediate biosynthesis; chorismate biosynthesis; chorismate from D-erythrose 4-phosphate and phosphoenolpyruvate: step 2/7. Catalyzes the conversion of 3-deoxy-D-arabino-heptulosonate 7-phosphate (DAHP) to dehydroquinate (DHQ). This Bacillus pumilus (strain SAFR-032) protein is 3-dehydroquinate synthase.